The chain runs to 122 residues: Large ribosomal subunit protein uL14 (122 aa).

It belongs to the universal ribosomal protein uL14 family. In terms of assembly, part of the 50S ribosomal subunit. Forms a cluster with proteins L3 and L19. In the 70S ribosome, L14 and L19 interact and together make contacts with the 16S rRNA in bridges B5 and B8.

Its function is as follows. Binds to 23S rRNA. Forms part of two intersubunit bridges in the 70S ribosome. This Mycoplasma genitalium (strain ATCC 33530 / DSM 19775 / NCTC 10195 / G37) (Mycoplasmoides genitalium) protein is Large ribosomal subunit protein uL14.